A 494-amino-acid polypeptide reads, in one-letter code: GTPase Der (494 aa).

EngA-type G domains follow at residues 3–166 (PVIA…MDAE) and 207–380 (IKLA…DCST). GTP-binding positions include 9–16 (GRPNVGKS), 56–60 (DTGGI), 118–121 (NKTD), 213–220 (GRPNVGKS), 260–264 (DTAGV), and 325–328 (NKWD). One can recognise a KH-like domain in the interval 381 to 465 (KRVGTSLLTR…PIRIQFKEGE (85 aa)).

Belongs to the TRAFAC class TrmE-Era-EngA-EngB-Septin-like GTPase superfamily. EngA (Der) GTPase family. Associates with the 50S ribosomal subunit.

Functionally, GTPase that plays an essential role in the late steps of ribosome biogenesis. In Yersinia enterocolitica serotype O:8 / biotype 1B (strain NCTC 13174 / 8081), this protein is GTPase Der.